Reading from the N-terminus, the 511-residue chain is Glucans biosynthesis protein G (511 aa).

The N-terminal stretch at 1 to 22 (MMKMRWLSAAVMLTLYTSSSWA) is a signal peptide.

The protein belongs to the OpgD/OpgG family.

The protein localises to the periplasm. The protein operates within glycan metabolism; osmoregulated periplasmic glucan (OPG) biosynthesis. Functionally, involved in the biosynthesis of osmoregulated periplasmic glucans (OPGs). The chain is Glucans biosynthesis protein G from Shigella dysenteriae serotype 1 (strain Sd197).